The sequence spans 370 residues: Protein SUPPRESSOR OF NIM1 1 (370 aa).

Residues 1–43 form the F-box domain; the sequence is MALPWELEEDILSRLPPISLVRFRTVSKHWNSLFNDKTFINNH.

As to expression, ubiquitous, at low levels.

In terms of biological role, negatively regulates a plant defense signaling pathway which is independent of salicylic acid (SA) and systemic acquired resistance (SAR). Confers sensitivity to P.syringae and P.parasitica. This is Protein SUPPRESSOR OF NIM1 1 (SON1) from Arabidopsis thaliana (Mouse-ear cress).